A 285-amino-acid chain; its full sequence is ATP synthase gamma chain (285 aa).

Belongs to the ATPase gamma chain family. In terms of assembly, F-type ATPases have 2 components, CF(1) - the catalytic core - and CF(0) - the membrane proton channel. CF(1) has five subunits: alpha(3), beta(3), gamma(1), delta(1), epsilon(1). CF(0) has three main subunits: a, b and c.

Its subcellular location is the cell membrane. Produces ATP from ADP in the presence of a proton gradient across the membrane. The gamma chain is believed to be important in regulating ATPase activity and the flow of protons through the CF(0) complex. The polypeptide is ATP synthase gamma chain (Dehalococcoides mccartyi (strain CBDB1)).